The following is a 399-amino-acid chain: UDP-N-acetylglucosamine--N-acetylmuramyl-(pentapeptide) pyrophosphoryl-undecaprenol N-acetylglucosamine transferase (399 aa).

Positions 1–31 are disordered; it reads MTSRFGHSQHPRRGRSARARAGRREGVQSNF. Basic residues predominate over residues 7–21; the sequence is HSQHPRRGRSARARA. Residues 58–60, Asn-170, Arg-206, Ser-234, Ile-288, and Gln-333 contribute to the UDP-N-acetyl-alpha-D-glucosamine site; that span reads TGG.

This sequence belongs to the glycosyltransferase 28 family. MurG subfamily.

It is found in the cell inner membrane. The enzyme catalyses di-trans,octa-cis-undecaprenyl diphospho-N-acetyl-alpha-D-muramoyl-L-alanyl-D-glutamyl-meso-2,6-diaminopimeloyl-D-alanyl-D-alanine + UDP-N-acetyl-alpha-D-glucosamine = di-trans,octa-cis-undecaprenyl diphospho-[N-acetyl-alpha-D-glucosaminyl-(1-&gt;4)]-N-acetyl-alpha-D-muramoyl-L-alanyl-D-glutamyl-meso-2,6-diaminopimeloyl-D-alanyl-D-alanine + UDP + H(+). The protein operates within cell wall biogenesis; peptidoglycan biosynthesis. Cell wall formation. Catalyzes the transfer of a GlcNAc subunit on undecaprenyl-pyrophosphoryl-MurNAc-pentapeptide (lipid intermediate I) to form undecaprenyl-pyrophosphoryl-MurNAc-(pentapeptide)GlcNAc (lipid intermediate II). This chain is UDP-N-acetylglucosamine--N-acetylmuramyl-(pentapeptide) pyrophosphoryl-undecaprenol N-acetylglucosamine transferase, found in Acidovorax sp. (strain JS42).